The chain runs to 247 residues: 6-carboxyhexanoate--CoA ligase (247 aa).

Belongs to the BioW family. As to quaternary structure, homodimer. Requires Mg(2+) as cofactor.

It carries out the reaction heptanedioate + ATP + CoA = 6-carboxyhexanoyl-CoA + AMP + diphosphate. Its pathway is metabolic intermediate metabolism; pimeloyl-CoA biosynthesis; pimeloyl-CoA from pimelate: step 1/1. Catalyzes the transformation of pimelate into pimeloyl-CoA with concomitant hydrolysis of ATP to AMP. The polypeptide is 6-carboxyhexanoate--CoA ligase (Corynebacterium diphtheriae (strain ATCC 700971 / NCTC 13129 / Biotype gravis)).